Consider the following 683-residue polypeptide: Probable potassium transport system protein Kup 1 (683 aa).

Helical transmembrane passes span 13 to 33 (GLLI…LYVM), 55 to 75 (ISLV…FIAL), 98 to 118 (WLVL…TLTP), 139 to 159 (VPVS…LLLF), 168 to 188 (IIGK…GVIG), 218 to 238 (AGIF…ALYS), 251 to 271 (SWPY…VWIL), 296 to 316 (LAAI…LITG), 345 to 365 (IYIP…VLFF), 376 to 396 (GLSI…WLAM), 401 to 421 (TIWN…FMLA), and 426 to 446 (FMHG…IMYV).

The protein belongs to the HAK/KUP transporter (TC 2.A.72) family.

It localises to the cell membrane. It carries out the reaction K(+)(in) + H(+)(in) = K(+)(out) + H(+)(out). Functionally, transport of potassium into the cell. Likely operates as a K(+):H(+) symporter. This chain is Probable potassium transport system protein Kup 1, found in Lactobacillus johnsonii (strain CNCM I-12250 / La1 / NCC 533).